Consider the following 257-residue polypeptide: Septu protein PtuB (257 aa).

Residues 49-96 (CVYCECRLDEESKYMEVEHFLPKDTYPNLVVNWRNLLPSCKRCNGKKG) form the HNH domain.

Its function is as follows. Component of antiviral defense system Septu type I, composed of PtuA and PtuB. Expression of Septu type I in B.subtilis (strain BEST7003) confers resistance to phages SBSphiC and SBSphiJ. May be a nuclease. The protein is Septu protein PtuB of Bacillus thuringiensis.